Consider the following 65-residue polypeptide: UPF0337 protein PA4738 (65 aa).

This sequence belongs to the UPF0337 (CsbD) family.

The chain is UPF0337 protein PA4738 from Pseudomonas aeruginosa (strain ATCC 15692 / DSM 22644 / CIP 104116 / JCM 14847 / LMG 12228 / 1C / PRS 101 / PAO1).